The primary structure comprises 341 residues: NADH-quinone oxidoreductase subunit H 1 (341 aa).

8 helical membrane passes run 13 to 33 (LVVI…IAYI), 82 to 102 (GVFL…WAVI), 115 to 135 (VGVL…IMAG), 161 to 181 (IGFV…TAIV), 190 to 210 (LLGW…VSAL), 248 to 268 (YVAI…GWLP), 277 to 297 (WVPG…LFAM), and 317 to 337 (VFLP…QFAG).

Belongs to the complex I subunit 1 family. In terms of assembly, NDH-1 is composed of 14 different subunits. Subunits NuoA, H, J, K, L, M, N constitute the membrane sector of the complex.

It localises to the cell inner membrane. It carries out the reaction a quinone + NADH + 5 H(+)(in) = a quinol + NAD(+) + 4 H(+)(out). Functionally, NDH-1 shuttles electrons from NADH, via FMN and iron-sulfur (Fe-S) centers, to quinones in the respiratory chain. The immediate electron acceptor for the enzyme in this species is believed to be ubiquinone. Couples the redox reaction to proton translocation (for every two electrons transferred, four hydrogen ions are translocated across the cytoplasmic membrane), and thus conserves the redox energy in a proton gradient. This subunit may bind ubiquinone. This chain is NADH-quinone oxidoreductase subunit H 1, found in Rhodopseudomonas palustris (strain BisB18).